A 493-amino-acid polypeptide reads, in one-letter code: Keratin, type II cuticular Hb3 (493 aa).

A head region spans residues 1–111 (MTCGFSTVGS…PNAQCVKQEE (111 aa)). Positions 111–422 (EKEQIKCLNN…RLLEGEEQRL (312 aa)) constitute an IF rod domain. The coil 1A stretch occupies residues 112–146 (KEQIKCLNNRFAAFIDKVRFLEQQNKLLETKLQFY). The linker 1 stretch occupies residues 147-156 (QNRQCCESNL). The tract at residues 157-257 (EPLFEGYIET…YEEEIRVLQA (101 aa)) is coil 1B. K217 participates in a covalent cross-link: Glycyl lysine isopeptide (Lys-Gly) (interchain with G-Cter in SUMO1). The tract at residues 258–274 (NISDTSVIVKMDNSRGL) is linker 12. The segment at 275 to 418 (NMDNIVAEIK…ATYRRLLEGE (144 aa)) is coil 2. The tract at residues 419-493 (EQRLCEGVGA…GGGSCSLGRC (75 aa)) is tail.

It belongs to the intermediate filament family. In terms of assembly, heterotetramer of two type I and two type II keratins.

In Bos taurus (Bovine), this protein is Keratin, type II cuticular Hb3.